The chain runs to 288 residues: MSKITLVLTMNYITSKIAKEILNSQSEEIFLNLDLNKTEKKEKILIDREKKIAKFPEGDVSFDILKKIAKDEGHIYFIKDGEVFKAAISNNGYYKLVPTIPPTIEINGIRMHRTKEVNPYEDTLNKINAVKVKKGEKVLDTCMGLGYTAIEAYRRGAEVITIEKNPNVLELAKINPYSEELFKGGIKIILGDAYDVIKRFKDEEFDVVIHDPPRFSLAGHLYSEEFYKEIFRVLKPGGRLFHYVGNPGKKYRGKDLQKGVMERLRKVGFVNVKRVEEALGVVAVKPRD.

This is an uncharacterized protein from Methanocaldococcus jannaschii (strain ATCC 43067 / DSM 2661 / JAL-1 / JCM 10045 / NBRC 100440) (Methanococcus jannaschii).